We begin with the raw amino-acid sequence, 141 residues long: 6,7-dimethyl-8-ribityllumazine synthase (141 aa).

Residues F13, 45–47 (SFE), and 69–71 (AII) each bind 5-amino-6-(D-ribitylamino)uracil. 74 to 75 (DT) contacts (2S)-2-hydroxy-3-oxobutyl phosphate. H77 serves as the catalytic Proton donor. Residue L102 participates in 5-amino-6-(D-ribitylamino)uracil binding. R117 lines the (2S)-2-hydroxy-3-oxobutyl phosphate pocket.

Belongs to the DMRL synthase family.

It carries out the reaction (2S)-2-hydroxy-3-oxobutyl phosphate + 5-amino-6-(D-ribitylamino)uracil = 6,7-dimethyl-8-(1-D-ribityl)lumazine + phosphate + 2 H2O + H(+). It participates in cofactor biosynthesis; riboflavin biosynthesis; riboflavin from 2-hydroxy-3-oxobutyl phosphate and 5-amino-6-(D-ribitylamino)uracil: step 1/2. Catalyzes the formation of 6,7-dimethyl-8-ribityllumazine by condensation of 5-amino-6-(D-ribitylamino)uracil with 3,4-dihydroxy-2-butanone 4-phosphate. This is the penultimate step in the biosynthesis of riboflavin. The protein is 6,7-dimethyl-8-ribityllumazine synthase of Methanopyrus kandleri (strain AV19 / DSM 6324 / JCM 9639 / NBRC 100938).